The sequence spans 302 residues: Recombination-associated protein RdgC (302 aa).

The protein belongs to the RdgC family.

The protein localises to the cytoplasm. It is found in the nucleoid. Its function is as follows. May be involved in recombination. The chain is Recombination-associated protein RdgC from Xanthomonas campestris pv. campestris (strain 8004).